Here is a 620-residue protein sequence, read N- to C-terminus: MKQSKMLIPTLREMPSDAQVISHALMVRAGYVRQVSAGIYAYMPLANRAIEKFKTIMREEFEKIGAVEMLAPALLTADLWRESGRYETYGEDLYKLKNRDKSDFILGPTHEETFTVLVRDAVKSYKQLPLNLYQIQSKYRDEKRPRNGLLRTREFIMKDAYSFHQNYEDLDVTYEDYRKAYEAIFTRAGLEFKAIIGDGGAMGGKDSQEFMAVTPERTDLNRWVVLDKSIASLDEIPEDVMEEIKNELTSWLVAGEDTIAYSTESSYAANLEMATNAYTPATKVVTQEEVSRVETPGCKSIDDVAAFLNIPEEQTIKTLLFTADDEPVVALLVGNDQVNDVKLKNYLAADFLKPATEDEARQVFGANFGSLGPVNLPENVRIIADRKVQDVANAVVGANEDGYHLTGVNPERDFKAEYVDIRKVKEGEISPDGQGVLQFARGIEIGHIFKLGTRYSESMGANVLDENGRAVPIIMGCYGIGVSRILSAVIEQHARLFVNKTPKGQYRYAWGINFPKELAPYDVHLITVNTKDEEANALTDRLEAALAAEGYDVLIDDRNERVGSKFSDSDLIGLPIRVTVGKKASEGVVEVKIKATGDTIEVNADNLIETLAILTTEQDA.

The protein belongs to the class-II aminoacyl-tRNA synthetase family. ProS type 1 subfamily. Homodimer.

It localises to the cytoplasm. The enzyme catalyses tRNA(Pro) + L-proline + ATP = L-prolyl-tRNA(Pro) + AMP + diphosphate. Catalyzes the attachment of proline to tRNA(Pro) in a two-step reaction: proline is first activated by ATP to form Pro-AMP and then transferred to the acceptor end of tRNA(Pro). As ProRS can inadvertently accommodate and process non-cognate amino acids such as alanine and cysteine, to avoid such errors it has two additional distinct editing activities against alanine. One activity is designated as 'pretransfer' editing and involves the tRNA(Pro)-independent hydrolysis of activated Ala-AMP. The other activity is designated 'posttransfer' editing and involves deacylation of mischarged Ala-tRNA(Pro). The misacylated Cys-tRNA(Pro) is not edited by ProRS. The chain is Proline--tRNA ligase from Streptococcus thermophilus (strain CNRZ 1066).